Reading from the N-terminus, the 647-residue chain is tRNA 5-methylaminomethyl-2-thiouridine biosynthesis bifunctional protein MnmC (647 aa).

The interval 1–227 (MLTWKNNLTP…KREMLIGSYS (227 aa)) is tRNA (mnm(5)s(2)U34)-methyltransferase. The segment at 256–647 (VGAGIAGTTL…ARFLYRKVRK (392 aa)) is FAD-dependent cmnm(5)s(2)U34 oxidoreductase.

It in the N-terminal section; belongs to the methyltransferase superfamily. tRNA (mnm(5)s(2)U34)-methyltransferase family. The protein in the C-terminal section; belongs to the DAO family. It depends on FAD as a cofactor.

Its subcellular location is the cytoplasm. The catalysed reaction is 5-aminomethyl-2-thiouridine(34) in tRNA + S-adenosyl-L-methionine = 5-methylaminomethyl-2-thiouridine(34) in tRNA + S-adenosyl-L-homocysteine + H(+). Catalyzes the last two steps in the biosynthesis of 5-methylaminomethyl-2-thiouridine (mnm(5)s(2)U) at the wobble position (U34) in tRNA. Catalyzes the FAD-dependent demodification of cmnm(5)s(2)U34 to nm(5)s(2)U34, followed by the transfer of a methyl group from S-adenosyl-L-methionine to nm(5)s(2)U34, to form mnm(5)s(2)U34. This Leptospira interrogans serogroup Icterohaemorrhagiae serovar copenhageni (strain Fiocruz L1-130) protein is tRNA 5-methylaminomethyl-2-thiouridine biosynthesis bifunctional protein MnmC.